The sequence spans 504 residues: Maturase K (504 aa).

It belongs to the intron maturase 2 family. MatK subfamily.

The protein resides in the plastid. Its subcellular location is the chloroplast. Functionally, usually encoded in the trnK tRNA gene intron. Probably assists in splicing its own and other chloroplast group II introns. The sequence is that of Maturase K from Vigna unguiculata (Cowpea).